The following is a 285-amino-acid chain: Small ribosomal subunit protein uS5x (285 aa).

The segment covering methionine 1–phenylalanine 19 has biased composition (basic and acidic residues). A disordered region spans residues methionine 1 to glutamate 51. Over residues arginine 35–glycine 46 the composition is skewed to basic residues. The S5 DRBM domain maps to leucine 96–valine 159.

It belongs to the universal ribosomal protein uS5 family. As to quaternary structure, interacts with MBD6.

In terms of biological role, component of the ribosome, a large ribonucleoprotein complex responsible for the synthesis of proteins in the cell. The small ribosomal subunit (SSU) binds messenger RNAs (mRNAs) and translates the encoded message by selecting cognate aminoacyl-transfer RNA (tRNA) molecules. The large subunit (LSU) contains the ribosomal catalytic site termed the peptidyl transferase center (PTC), which catalyzes the formation of peptide bonds, thereby polymerizing the amino acids delivered by tRNAs into a polypeptide chain. The nascent polypeptides leave the ribosome through a tunnel in the LSU and interact with protein factors that function in enzymatic processing, targeting, and the membrane insertion of nascent chains at the exit of the ribosomal tunnel. Plays a role in the assembly and function of the 40S ribosomal subunit. Mutations in this protein affects the control of translational fidelity. Involved in nucleolar processing of pre-18S ribosomal RNA and ribosome assembly. Also involved in RNA-directed DNA methylation (RdDM). The chain is Small ribosomal subunit protein uS5x from Arabidopsis thaliana (Mouse-ear cress).